We begin with the raw amino-acid sequence, 345 residues long: MRVTDFSFDLPDELIARYPMAQRNASRLLTLDGNTGTLADKQFTDLLGMINPGDLMVFNNTRVIPARLFGQKASGGKLEILVERMLDDKRILAHVRSSKSPKVDSIIHLDGGYEMKMAARYDALFELELLSDLTILEVLEAVGHMPLPPYIDRPDEDADKERYQTVYNQNPGAVAAPTAGLHFDDAMLDALKAKGVNIAFVTLHVGAGTFQPVRVDNVLEHKMHSEWANVPQDVVDLIAQTKAAGKRVVAVGTTSVRSLESAARASEGELKAFSGDTDIFIYPGYQFQIVDAMITNFHLPESTLIMLVSAFAGFDHVMAAYQHAITQKYRFFSYGDAMFVTKKAH.

It belongs to the QueA family. Monomer.

Its subcellular location is the cytoplasm. The enzyme catalyses 7-aminomethyl-7-carbaguanosine(34) in tRNA + S-adenosyl-L-methionine = epoxyqueuosine(34) in tRNA + adenine + L-methionine + 2 H(+). It functions in the pathway tRNA modification; tRNA-queuosine biosynthesis. Its function is as follows. Transfers and isomerizes the ribose moiety from AdoMet to the 7-aminomethyl group of 7-deazaguanine (preQ1-tRNA) to give epoxyqueuosine (oQ-tRNA). In Shewanella sp. (strain ANA-3), this protein is S-adenosylmethionine:tRNA ribosyltransferase-isomerase.